The sequence spans 333 residues: Probable 4-hydroxyproline 2-epimerase (333 aa).

Cys90 (proton acceptor) is an active-site residue. Substrate-binding positions include 91 to 92, His223, and Asp249; that span reads GH. Cys253 (proton donor) is an active-site residue. 254–255 lines the substrate pocket; the sequence is GT.

It belongs to the proline racemase family.

It carries out the reaction trans-4-hydroxy-L-proline = cis-4-hydroxy-D-proline. Its function is as follows. Likely catalyzes the epimerization of trans-4-hydroxy-L-proline (t4LHyp) to cis-4-hydroxy-D-proline (c4DHyp). May be involved in the degradation pathway that converts t4LHyp to alpha-ketoglutarate, which would allow R.meliloti to grow on t4LHyp as a sole carbon source. This Rhizobium meliloti (strain 1021) (Ensifer meliloti) protein is Probable 4-hydroxyproline 2-epimerase.